The chain runs to 376 residues: Thiol-disulfide oxidoreductase LTO1 (376 aa).

A chloroplast-targeting transit peptide spans 1 to 45 (MMARFVSVSSCQFHFGFREVSPPSVTSYPRRFEVSDRRFPAIPIK). The tract at residues 44 to 77 (IKCSSSEPENGEDSAPSLSSSSSSSTSEVSTSNS) is disordered. Over 46-81 (CSSSEPENGEDSAPSLSSSSSSSTSEVSTSNSSTYN) the chain is Stromal. Positions 57–77 (SAPSLSSSSSSSTSEVSTSNS) are enriched in low complexity. Residues 82 to 102 (WYTGIGGIGMLDTAYLTYLKV) traverse the membrane as a helical segment. Over 103–125 (TGSDAFCPIGGGTCGDVLNSDYA) the chain is Lumenal. A disulfide bridge links Cys-109 with Cys-116. A helical membrane pass occupies residues 126-146 (VVFGVPLPVIGFVMYGVVTAL). Residues 147–165 (SAELGEGNLPFGISKSNGR) are Stromal-facing. Residues 166–186 (FALFGITTAMASASAYFLYIL) traverse the membrane as a helical segment. Residues 187–192 (STKLSG) lie on the Lumenal side of the membrane. Residues 193–213 (SSCLYCLVSAFLSFSLFFLSV) form a helical membrane-spanning segment. Residues Cys-195 and Cys-198 are joined by a disulfide bond. At 214 to 223 (KDVKLQEIQQ) the chain is on the stromal side. The chain crosses the membrane as a helical span at residues 224 to 244 (VVGLQICLAIIVVASLTASYS). The Lumenal segment spans residues 245 to 376 (TAQPIPSRSG…DQANETNQLQ (132 aa)). Intrachain disulfides connect Cys-293–Cys-296 and Cys-316–Cys-331.

Belongs to the VKOR family. In terms of assembly, interacts with the PSII subunits PSBO1 and PSBO2. Interacts with TL17, TL20.3, HCF164, PETJ, VDE1, EDA3, FKBP13 and FKBP20-2. Expressed in cotyledons, rosette leaves, stems, cauline leaves and flowers.

It localises to the plastid. It is found in the chloroplast thylakoid membrane. Functionally, thiol-disulfide oxidoreductase catalyzing disulfide bond formation of chloroplast proteins and involved in redox regulation and photosynthetic electron transport. Required for the assembly of photosystem II (PSII) through the formation of disulfide bond in PSBO, a subunit of the PSII oxygen-evolving complex in the thylakoid lumen. Involved in the formation of disulfide bonds in the lumenal protein FKBP13. In vitro, reduces phylloquinone (vitamin K1) and menaquinone (vitamin K2) to their respective quinol. Cannot reduce phylloquinone epoxide to phylloquinone. Plays an important role in regulating the thylakoid lumen redox. This Arabidopsis thaliana (Mouse-ear cress) protein is Thiol-disulfide oxidoreductase LTO1.